The sequence spans 31 residues: Unknown protein from spot 104 of 2D-PAGE of thylakoid (31 aa).

It localises to the plastid. The protein localises to the chloroplast thylakoid. The sequence is that of Unknown protein from spot 104 of 2D-PAGE of thylakoid from Pisum sativum (Garden pea).